The sequence spans 240 residues: UDP-2,3-diacylglucosamine hydrolase (240 aa).

Mn(2+) is bound by residues D8, H10, D41, N79, and H114. 79 to 80 (NR) contacts substrate. D122, S160, N164, K167, and H195 together coordinate substrate. Mn(2+)-binding residues include H195 and H197.

The protein belongs to the LpxH family. Mn(2+) is required as a cofactor.

Its subcellular location is the cell inner membrane. It catalyses the reaction UDP-2-N,3-O-bis[(3R)-3-hydroxytetradecanoyl]-alpha-D-glucosamine + H2O = 2-N,3-O-bis[(3R)-3-hydroxytetradecanoyl]-alpha-D-glucosaminyl 1-phosphate + UMP + 2 H(+). The protein operates within glycolipid biosynthesis; lipid IV(A) biosynthesis; lipid IV(A) from (3R)-3-hydroxytetradecanoyl-[acyl-carrier-protein] and UDP-N-acetyl-alpha-D-glucosamine: step 4/6. Its function is as follows. Hydrolyzes the pyrophosphate bond of UDP-2,3-diacylglucosamine to yield 2,3-diacylglucosamine 1-phosphate (lipid X) and UMP by catalyzing the attack of water at the alpha-P atom. Involved in the biosynthesis of lipid A, a phosphorylated glycolipid that anchors the lipopolysaccharide to the outer membrane of the cell. This chain is UDP-2,3-diacylglucosamine hydrolase, found in Salmonella paratyphi A (strain ATCC 9150 / SARB42).